A 220-amino-acid polypeptide reads, in one-letter code: Probable septum site-determining protein MinC (220 aa).

Belongs to the MinC family. In terms of assembly, interacts with MinD and FtsZ.

Functionally, cell division inhibitor that blocks the formation of polar Z ring septums. Rapidly oscillates between the poles of the cell to destabilize FtsZ filaments that have formed before they mature into polar Z rings. Prevents FtsZ polymerization. The polypeptide is Probable septum site-determining protein MinC (Prochlorococcus marinus subsp. pastoris (strain CCMP1986 / NIES-2087 / MED4)).